The primary structure comprises 431 residues: Growth-regulating factor 9 (431 aa).

The QLQ domain maps to 24–59 (WMKAAQLMEFRMQALVYRYIEAGLRVPHHLVVPIWN). 2 WRC domains span residues 89-133 (ETEP…LVES) and 307-351 (DNEP…VDTT). 4 short sequence motifs (bipartite nuclear localization signal) span residues 94–104 (RCRRTDGKKWR), 122–129 (RGRKRSRK), 312–322 (RCRRTDGKKWR), and 340–345 (RGMKKK).

Belongs to the GRF family. As to quaternary structure, interacts with GIF1. As to expression, detected in the shoot apical meristem (SAM) and in young leaf primordium.

It localises to the nucleus. Transcription activator that plays a role in the regulation of cell expansion in leaf and cotyledons tissues. Component of a network formed by miR396, the GRFs and their interacting factors (GIFs) acting in the regulation of meristem function, at least partially through the control of cell proliferation. The protein is Growth-regulating factor 9 (GRF9) of Arabidopsis thaliana (Mouse-ear cress).